We begin with the raw amino-acid sequence, 474 residues long: MSTLGRYRHVVKLGEGTYGMVYKGTEIQTGRVVAFKRMVVTSDDEGIPGAAIREICLLKELRHNNVVELFEVLFDPPKITMIFELCDCDLKRYMESRPQRLLDANTEMRPILKQIFLGLEYLHGRCVVHRDMKPQNIFVNVRGPDFAAMTALPSSPQQSMRVPHAGGTNGEAGRASANGNEHAPRPTAAEGSVSPWEEAANTKDAPNQLIIKIGDFGLARVEEIPVKKYSHEVVTLWYRSPDVLMSSALYSYPVDIWSMGAIFFEMATSKVLFSGRNEDEQLLRMFWLLGSPTKETWPSMMTYTGTMERLERSSRAAAERQDLTVNGDVYVQQQQLQAQQQQPQQGSSPSHSSSRAPDLLTQLAHKRFYHSESAMQQRRESASSAANSYRLPVELWFDRPLFKEYMAATRCDVSVSPEGIDLLRRCLMYEPNQRITAAEAVHHPYLERVPVPTAGSLDVLISSLMQTMETIHLL.

The 440-residue stretch at 7–446 (YRHVVKLGEG…AAEAVHHPYL (440 aa)) folds into the Protein kinase domain. Residues 13–21 (LGEGTYGMV) and Lys36 contribute to the ATP site. At Thr17 the chain carries Phosphothreonine. A Phosphotyrosine modification is found at Tyr18. Asp131 (proton acceptor) is an active-site residue. Residues 150-200 (TALPSSPQQSMRVPHAGGTNGEAGRASANGNEHAPRPTAAEGSVSPWEEAA) are disordered. Position 230 is a phosphoserine (Ser230). The span at 334 to 354 (QQLQAQQQQPQQGSSPSHSSS) shows a compositional bias: low complexity. The interval 334-356 (QQLQAQQQQPQQGSSPSHSSSRA) is disordered.

Belongs to the protein kinase superfamily. CMGC Ser/Thr protein kinase family. CDC2/CDKX subfamily. As to quaternary structure, may form a complex composed of at least the catalytic subunit CRK2 and a cyclin. Requires Mg(2+) as cofactor.

Its subcellular location is the cytoplasm. It carries out the reaction L-seryl-[protein] + ATP = O-phospho-L-seryl-[protein] + ADP + H(+). It catalyses the reaction L-threonyl-[protein] + ATP = O-phospho-L-threonyl-[protein] + ADP + H(+). The enzyme catalyses [DNA-directed RNA polymerase] + ATP = phospho-[DNA-directed RNA polymerase] + ADP + H(+). With respect to regulation, phosphorylation at Thr-17 or Tyr-18 inactivates the enzyme, while phosphorylation at Ser-230 activates it. Functionally, serine/threonine-protein kinase. Involved in the control of the cell cycle. Required for entry into S-phase and mitosis. Probable component of the kinase complex that phosphorylates the repetitive C-terminus of RNA polymerase II. This is Cyclin-dependent kinase 2 homolog from Crithidia fasciculata.